The chain runs to 109 residues: U4-lycotoxin-Ls1a (109 aa).

A signal peptide spans 1–22 (MKVLVLFSVLFLTLFSYSSTEA). The propeptide occupies 23-44 (IDEFDSDAEDDMLSLMANEQVR). Residues 45–88 (AKACTPRLHDCSHDRHSCCRGELFKDVCYCFYPEGEDKTEVCSC) are knottin domain. 4 disulfides stabilise this stretch: C48/C63, C55/C72, C62/C88, and C74/C86. The linear cationic cytotoxin domain stretch occupies residues 89–108 (QQPKSHKYIEKVVDKAKTVV).

It belongs to the neurotoxin 19 (CSTX) family. 05 (U4-Lctx) subfamily. As to expression, expressed by the venom gland.

The protein resides in the secreted. Enhances the high-affinity desensitization of human P2RX3 purinoceptors. The protein is U4-lycotoxin-Ls1a of Lycosa singoriensis (Wolf spider).